A 111-amino-acid polypeptide reads, in one-letter code: SRA stem-loop-interacting RNA-binding protein, mitochondrial (111 aa).

The RRM domain maps to 19–96 (PVAFVRKIPW…VKLHVQPQRP (78 aa)). A disordered region spans residues 92 to 111 (QPQRPKALQGDQTSDEEKDF). Thr104 bears the Phosphothreonine mark. Ser105 is subject to Phosphoserine.

Its subcellular location is the mitochondrion. The protein resides in the nucleus. In terms of biological role, RNA-binding protein that acts as a nuclear receptor corepressor. Probably acts by binding the SRA RNA, and repressing the SRA-mediated nuclear receptor coactivation. Binds the STR7 loop of SRA RNA. Also able to repress glucocorticoid (GR), androgen (AR), thyroid (TR) and VDR-mediated transactivation. The sequence is that of SRA stem-loop-interacting RNA-binding protein, mitochondrial (SLIRP) from Bos taurus (Bovine).